The following is a 319-amino-acid chain: HPr kinase/phosphorylase (319 aa).

Active-site residues include His146 and Lys167. Residue 161 to 168 coordinates ATP; sequence GESGLGKS. Ser168 lines the Mg(2+) pocket. Asp185 (proton acceptor; for phosphorylation activity. Proton donor; for dephosphorylation activity) is an active-site residue. Residues 209–218 are important for the catalytic mechanism of both phosphorylation and dephosphorylation; it reads LEVRGIGLLD. A Mg(2+)-binding site is contributed by Glu210. The active site involves Arg252. Residues 273–278 form an important for the catalytic mechanism of dephosphorylation region; it reads QVVAGR.

Belongs to the HPrK/P family. Homohexamer. It depends on Mg(2+) as a cofactor.

The enzyme catalyses [HPr protein]-L-serine + ATP = [HPr protein]-O-phospho-L-serine + ADP + H(+). The catalysed reaction is [HPr protein]-O-phospho-L-serine + phosphate + H(+) = [HPr protein]-L-serine + diphosphate. In terms of biological role, catalyzes the ATP- as well as the pyrophosphate-dependent phosphorylation of a specific serine residue in HPr, a phosphocarrier protein of the phosphoenolpyruvate-dependent sugar phosphotransferase system (PTS). HprK/P also catalyzes the pyrophosphate-producing, inorganic phosphate-dependent dephosphorylation (phosphorolysis) of seryl-phosphorylated HPr (P-Ser-HPr). The protein is HPr kinase/phosphorylase of Variovorax paradoxus (strain S110).